A 187-amino-acid chain; its full sequence is Protein lethal(2)essential for life (187 aa).

Residues 61 to 170 enclose the sHSP domain; sequence NSLQKQESGS…TERLVQITQT (110 aa). The tract at residues 151 to 187 is disordered; that stretch reads APMKALPPPQTERLVQITQTGPSSKEDNAKKVETSTA. Over residues 174–187 the composition is skewed to basic and acidic residues; the sequence is SKEDNAKKVETSTA.

Belongs to the small heat shock protein (HSP20) family. As to expression, ubiquitously expressed during embryogenesis with no sign of tissue specificity in expression up to stage 16.

Its function is as follows. Vital role in embryonic development. This is Protein lethal(2)essential for life (l(2)efl) from Drosophila melanogaster (Fruit fly).